Reading from the N-terminus, the 172-residue chain is Scytalone dehydratase-like protein Arp1 (172 aa).

Tyr-49 is a substrate binding site. Catalysis depends on residues His-84 and His-109. Asn-130 provides a ligand contact to substrate.

Belongs to the scytalone dehydratase family. As to quaternary structure, homotrimer. Each subunit contains an active site, located in the central part of the hydrophobic core of the monomer, which functions independently.

Its function is as follows. Scytalone dehydratase-like protein; part of the Pks2 gene cluster that mediates the formation of infectious structures (appressoria), enabling these fungi to kill insects faster. The product of the Pks2 gene cluster is different from the one of Pks1 and has still not been identified. The protein is Scytalone dehydratase-like protein Arp1 of Metarhizium guizhouense (strain ARSEF 977).